A 398-amino-acid chain; its full sequence is Putative transposase y4qJ (398 aa).

This sequence belongs to the transposase 32 family.

The protein is Putative transposase y4qJ of Sinorhizobium fredii (strain NBRC 101917 / NGR234).